The chain runs to 328 residues: Malate dehydrogenase (328 aa).

11 to 17 (GAAGQIG) is an NAD(+) binding site. The substrate site is built by Arg94 and Arg100. NAD(+) contacts are provided by residues Asn107, Gln114, and 131-133 (VGN). Asn133 and Arg164 together coordinate substrate. His189 functions as the Proton acceptor in the catalytic mechanism.

This sequence belongs to the LDH/MDH superfamily. MDH type 2 family.

It carries out the reaction (S)-malate + NAD(+) = oxaloacetate + NADH + H(+). Its function is as follows. Catalyzes the reversible oxidation of malate to oxaloacetate. The polypeptide is Malate dehydrogenase (Xanthomonas campestris pv. campestris (strain 8004)).